Here is a 29-residue protein sequence, read N- to C-terminus: Cuticle protein 36 (29 aa).

In terms of biological role, component of the cuticle of migratory locust which contains more than 100 different structural proteins. This is Cuticle protein 36 from Locusta migratoria (Migratory locust).